The chain runs to 278 residues: HTH-type transcriptional regulator HdfR (278 aa).

The 58-residue stretch at 1 to 58 folds into the HTH lysR-type domain; sequence MDTELLKTFLEVSRTRHFGRAAEALYLTQSAVSFRIRQLENQLGVNLFTRHRNNIRLT. A DNA-binding region (H-T-H motif) is located at residues 18-37; sequence FGRAAEALYLTQSAVSFRIR.

Belongs to the LysR transcriptional regulatory family.

In terms of biological role, negatively regulates the transcription of the flagellar master operon flhDC by binding to the upstream region of the operon. This Salmonella newport (strain SL254) protein is HTH-type transcriptional regulator HdfR.